We begin with the raw amino-acid sequence, 165 residues long: Protein SprT (165 aa).

One can recognise a SprT-like domain in the interval 22–163 (LAQANLKLGC…RCVHCGEQLV (142 aa)). Position 78 (His-78) interacts with Zn(2+). Glu-79 is an active-site residue. His-82 is a binding site for Zn(2+).

The protein belongs to the SprT family. The cofactor is Zn(2+).

It is found in the cytoplasm. The sequence is that of Protein SprT from Shigella dysenteriae serotype 1 (strain Sd197).